The primary structure comprises 123 residues: MRHKLAGRKFNRTSAHRQAMFKNMAVSLIEHELIKTTLPKAKDLRRVIEPMITHAKNNDTVAARRLAFARLRDRAAVQKLFAELAPRYQERAGGYVRILKCDFRAGDQAPMAYVELVDRPVAE.

It belongs to the bacterial ribosomal protein bL17 family. Part of the 50S ribosomal subunit. Contacts protein L32.

This chain is Large ribosomal subunit protein bL17, found in Dichelobacter nodosus (strain VCS1703A).